The following is a 562-amino-acid chain: uncharacterized protein (562 aa).

Transmembrane regions (helical) follow at residues 15-34 (WGGG…AFGI), 41-63 (VAGI…HFNL), 78-97 (LILF…FSAF), 104-126 (LNML…HFIT), and 165-187 (IALG…LLGL). 2 consecutive RCK C-terminal domains span residues 204–286 (QGLG…ITAF) and 289–374 (KPIE…VLGN). Transmembrane regions (helical) follow at residues 384 to 403 (LIPI…IPFM), 413 to 430 (LGLA…SRFG), 450 to 472 (IGIS…ETII), 476 to 498 (GYVW…GFIG), 505 to 524 (NYYT…PALA), and 539 to 561 (YATV…ILSL).

This sequence belongs to the AAE transporter (TC 2.A.81) family.

Its subcellular location is the cell membrane. This is an uncharacterized protein from Bacteroides fragilis (strain YCH46).